The following is a 204-amino-acid chain: Peptide deformylase (204 aa).

Fe cation-binding residues include Cys131 and His174. Glu175 is a catalytic residue. His178 contacts Fe cation.

This sequence belongs to the polypeptide deformylase family. Fe(2+) serves as cofactor.

It carries out the reaction N-terminal N-formyl-L-methionyl-[peptide] + H2O = N-terminal L-methionyl-[peptide] + formate. Functionally, removes the formyl group from the N-terminal Met of newly synthesized proteins. Requires at least a dipeptide for an efficient rate of reaction. N-terminal L-methionine is a prerequisite for activity but the enzyme has broad specificity at other positions. This Streptococcus mutans serotype c (strain ATCC 700610 / UA159) protein is Peptide deformylase.